Consider the following 315-residue polypeptide: Thioredoxin reductase (315 aa).

45–52 (EGNTPGGK) serves as a coordination point for FAD. Cys-145 and Cys-148 are joined by a disulfide. 288–297 (DCRSKSFRQI) contacts FAD.

This sequence belongs to the class-II pyridine nucleotide-disulfide oxidoreductase family. As to quaternary structure, homodimer. It depends on FAD as a cofactor.

It is found in the cytoplasm. The catalysed reaction is [thioredoxin]-dithiol + NADP(+) = [thioredoxin]-disulfide + NADPH + H(+). This is Thioredoxin reductase (trxB) from Mycoplasma genitalium (strain ATCC 33530 / DSM 19775 / NCTC 10195 / G37) (Mycoplasmoides genitalium).